A 621-amino-acid chain; its full sequence is Chaperone protein HscA homolog (621 aa).

This sequence belongs to the heat shock protein 70 family.

In terms of biological role, chaperone involved in the maturation of iron-sulfur cluster-containing proteins. Has a low intrinsic ATPase activity which is markedly stimulated by HscB. This is Chaperone protein HscA homolog from Cupriavidus necator (strain ATCC 17699 / DSM 428 / KCTC 22496 / NCIMB 10442 / H16 / Stanier 337) (Ralstonia eutropha).